The primary structure comprises 202 residues: Adapter protein MecA 2 (202 aa).

The protein belongs to the MecA family. In terms of assembly, homodimer.

Its function is as follows. Enables the recognition and targeting of unfolded and aggregated proteins to the ClpC protease or to other proteins involved in proteolysis. Acts negatively in the development of competence by binding ComK and recruiting it to the ClpCP protease. When overexpressed, inhibits sporulation. Also involved in Spx degradation by ClpC. This is Adapter protein MecA 2 (mecA2) from Bacillus cereus (strain ATCC 14579 / DSM 31 / CCUG 7414 / JCM 2152 / NBRC 15305 / NCIMB 9373 / NCTC 2599 / NRRL B-3711).